The following is a 436-amino-acid chain: MAKNVVVVGTQWGDEGKGKIVDWLTDHARGVVRFQGGHNAGHTLVIGANEYKLNLVPSGIVREGVACYIGNGVVLDAHHLLSEIRTLEAGGIRVRDRLRISPGCPLILGYHAALDRAREAAKSAGDKIGTTGKGIGPTYEDKVARRALRVYDLFDRERFAAKLRANLDYHNFVLTQHLGAEAVEFGSVFEQAMADAEEIRPMVADVSAELYAVNKSGGSLLFEGAQGTLLDIDHGTYPFVTSSNCVAGQAAAGSGVGPGRLHYVLGITKAYCTRVGGGPFPTELDIETADTPGQQMSSKGREFGTVTGRKRRCGWLDLGALKRSIIINGVTGLCITKLDVLDGLSELKLCTGYMLDGRRIDLLPMGSEEVTRCEPIFETMAGWSGTTFGAQSWEALPQEARAYLHRIEEICEIAIDVISTGPERDETILRRHPFGA.

GTP-binding positions include 13-19 and 41-43; these read GDEGKGK and GHT. The Proton acceptor role is filled by Asp14. Mg(2+) is bound by residues Asp14 and Gly41. IMP contacts are provided by residues 14-17, 39-42, Thr131, Arg145, Gln226, Thr241, and Arg309; these read DEGK and NAGH. The active-site Proton donor is the His42. 305-311 provides a ligand contact to substrate; sequence TVTGRKR. GTP is bound by residues Arg311, 337–339, and 419–421; these read KLD and STG.

It belongs to the adenylosuccinate synthetase family. As to quaternary structure, homodimer. Mg(2+) serves as cofactor.

It is found in the cytoplasm. The catalysed reaction is IMP + L-aspartate + GTP = N(6)-(1,2-dicarboxyethyl)-AMP + GDP + phosphate + 2 H(+). It functions in the pathway purine metabolism; AMP biosynthesis via de novo pathway; AMP from IMP: step 1/2. In terms of biological role, plays an important role in the de novo pathway of purine nucleotide biosynthesis. Catalyzes the first committed step in the biosynthesis of AMP from IMP. The polypeptide is Adenylosuccinate synthetase (Aromatoleum aromaticum (strain DSM 19018 / LMG 30748 / EbN1) (Azoarcus sp. (strain EbN1))).